The sequence spans 40 residues: MKVRKSLRSLKNKPGAQVVRRHGKVYVINKKDPRFKARQG.

The protein belongs to the bacterial ribosomal protein bL36 family.

This Corynebacterium urealyticum (strain ATCC 43042 / DSM 7109) protein is Large ribosomal subunit protein bL36.